The sequence spans 113 residues: 2Fe-2S ferredoxin (113 aa).

The region spanning P2–N104 is the 2Fe-2S ferredoxin-type domain. Residues C42, C48, C51, and C87 each coordinate [2Fe-2S] cluster.

The protein belongs to the adrenodoxin/putidaredoxin family. [2Fe-2S] cluster is required as a cofactor.

In terms of biological role, ferredoxin are iron-sulfur proteins that transfer electrons in a wide variety of metabolic reactions. This is 2Fe-2S ferredoxin (fdx) from Haemophilus influenzae (strain ATCC 51907 / DSM 11121 / KW20 / Rd).